We begin with the raw amino-acid sequence, 200 residues long: ASI1-immunoprecipitated protein 1 (200 aa).

Positions R18 to P101 constitute an RRM domain.

Component of the ASI1-AIPP1-EDM2 (AAE) RNA regulatory complex composed of at least AIPP1/EDM3, ASI1 and EDM2 and may contain CPL2, AIPP2 and AIPP3/BDT1. Binds directly to ASI1 and EDM2 and may function as a bridge protein between them. Co-associates with EDM2 to histone H3 lysine 9 dimethylation (H3K9me2)-marked chromatin and transcripts at a critical proximal polyadenylation site of RPP7 to hamper proximal transcript polyadeylation/termination.

It is found in the nucleus. In terms of biological role, prevents gene silencing by suppressing CHG methylation as well as histone H3 lysine 9 dimethylation (H3K9me2) status at target loci. Collaboratively with ASI1 and EDM2, the AAE complex regulates alternative RNA processing (e.g. alternative splicing) and epigenetic silencing (e.g. H3K9me2) of intronic heterochromatin-containing genes as well as genic heterochromatin-containing genes by promoting distal 3' polyadenylation, thus being required for the accumulation of their full-length transcripts. May also modulate transposable elements (TE) expression. Mediates RPP7-dependent race-specific disease resistance by promoting histone H3 lysine 9 dimethylation (H3K9me2) at the proximal RPP7 polyadenylation site, thus controlling alternative polyadenylation of RPP7 immune receptor transcripts and facilitating 2-phosphoserine RNAPII occupancy. In cv. Columbia, required for RPP7-dependent disease resistance against the Hyaloperonospora arabidopsidis isolate Hiks1. The chain is ASI1-immunoprecipitated protein 1 from Arabidopsis thaliana (Mouse-ear cress).